The sequence spans 345 residues: Heat-inducible transcription repressor HrcA (345 aa).

The protein belongs to the HrcA family.

Functionally, negative regulator of class I heat shock genes (grpE-dnaK-dnaJ and groELS operons). Prevents heat-shock induction of these operons. The sequence is that of Heat-inducible transcription repressor HrcA from Desulfitobacterium hafniense (strain DSM 10664 / DCB-2).